Here is a 353-residue protein sequence, read N- to C-terminus: Nicotinate-nucleotide--dimethylbenzimidazole phosphoribosyltransferase (353 aa).

E318 acts as the Proton acceptor in catalysis.

Belongs to the CobT family.

The catalysed reaction is 5,6-dimethylbenzimidazole + nicotinate beta-D-ribonucleotide = alpha-ribazole 5'-phosphate + nicotinate + H(+). It functions in the pathway nucleoside biosynthesis; alpha-ribazole biosynthesis; alpha-ribazole from 5,6-dimethylbenzimidazole: step 1/2. Its function is as follows. Catalyzes the synthesis of alpha-ribazole-5'-phosphate from nicotinate mononucleotide (NAMN) and 5,6-dimethylbenzimidazole (DMB). In Desulforudis audaxviator (strain MP104C), this protein is Nicotinate-nucleotide--dimethylbenzimidazole phosphoribosyltransferase.